We begin with the raw amino-acid sequence, 240 residues long: Adenosylcobinamide-GDP ribazoletransferase (240 aa).

Transmembrane regions (helical) follow at residues 31-51, 62-81, 109-129, 133-153, and 179-199; these read LLYY…ASHL, ALLL…DGLA, IAVV…WVLV, IGAQ…GLFL, and VLLV…LLAL.

The protein belongs to the CobS family. Mg(2+) serves as cofactor.

The protein resides in the cell inner membrane. The catalysed reaction is alpha-ribazole + adenosylcob(III)inamide-GDP = adenosylcob(III)alamin + GMP + H(+). It catalyses the reaction alpha-ribazole 5'-phosphate + adenosylcob(III)inamide-GDP = adenosylcob(III)alamin 5'-phosphate + GMP + H(+). It participates in cofactor biosynthesis; adenosylcobalamin biosynthesis; adenosylcobalamin from cob(II)yrinate a,c-diamide: step 7/7. Joins adenosylcobinamide-GDP and alpha-ribazole to generate adenosylcobalamin (Ado-cobalamin). Also synthesizes adenosylcobalamin 5'-phosphate from adenosylcobinamide-GDP and alpha-ribazole 5'-phosphate. This chain is Adenosylcobinamide-GDP ribazoletransferase, found in Pseudomonas putida (strain ATCC 47054 / DSM 6125 / CFBP 8728 / NCIMB 11950 / KT2440).